Consider the following 112-residue polypeptide: Nitrogen regulatory protein P-II (112 aa).

Y51 is modified (O-UMP-tyrosine).

Belongs to the P(II) protein family. In terms of assembly, homotrimer.

In terms of biological role, in nitrogen-limiting conditions, when the ratio of Gln to 2-ketoglutarate decreases, P-II is uridylylated to P-II-UMP. P-II-UMP allows the deadenylation of glutamine synthetase (GS), thus activating the enzyme. Conversely, in nitrogen excess P-II is deuridylated and promotes the adenylation of GS. P-II indirectly controls the transcription of the GS gene (glnA). P-II prevents NR-II-catalyzed conversion of NR-I to NR-I-phosphate, the transcriptional activator of glnA. When P-II is uridylylated to P-II-UMP, these events are reversed. In Klebsiella oxytoca, this protein is Nitrogen regulatory protein P-II (glnB).